Here is a 124-residue protein sequence, read N- to C-terminus: MEYEFRRNSLTGTFLATFSMDHEVLGQWFSEELGPELAKIQQVLDSVTEILAGKRESWQLIGSDLTLEIDREQARVYANVLGFDEEYELEDAMSLYDAESEAYCGLEDFEQALLSWQEFVQKGI.

Belongs to the UPF0231 family.

In Shewanella putrefaciens (strain CN-32 / ATCC BAA-453), this protein is UPF0231 protein Sputcn32_0682.